A 187-amino-acid polypeptide reads, in one-letter code: Acireductone dioxygenase (187 aa).

Fe(2+) contacts are provided by His-90, His-92, Glu-96, and His-135. Residues His-90, His-92, Glu-96, and His-135 each coordinate Ni(2+).

The protein belongs to the acireductone dioxygenase (ARD) family. Requires Fe(2+) as cofactor. It depends on Ni(2+) as a cofactor.

It localises to the cytoplasm. It is found in the nucleus. It catalyses the reaction 1,2-dihydroxy-5-(methylsulfanyl)pent-1-en-3-one + O2 = 4-methylsulfanyl-2-oxobutanoate + formate + 2 H(+). The catalysed reaction is 1,2-dihydroxy-5-(methylsulfanyl)pent-1-en-3-one + O2 = 3-(methylsulfanyl)propanoate + CO + formate + 2 H(+). The protein operates within amino-acid biosynthesis; L-methionine biosynthesis via salvage pathway; L-methionine from S-methyl-5-thio-alpha-D-ribose 1-phosphate: step 5/6. Catalyzes 2 different reactions between oxygen and the acireductone 1,2-dihydroxy-3-keto-5-methylthiopentene (DHK-MTPene) depending upon the metal bound in the active site. Fe-containing acireductone dioxygenase (Fe-ARD) produces formate and 2-keto-4-methylthiobutyrate (KMTB), the alpha-ketoacid precursor of methionine in the methionine recycle pathway. Ni-containing acireductone dioxygenase (Ni-ARD) produces methylthiopropionate, carbon monoxide and formate, and does not lie on the methionine recycle pathway. This chain is Acireductone dioxygenase, found in Drosophila pseudoobscura pseudoobscura (Fruit fly).